The primary structure comprises 233 residues: Lipoprotein-releasing system ATP-binding protein LolD (233 aa).

Positions Leu-9 to Arg-233 constitute an ABC transporter domain. Gly-45–Ser-52 contributes to the ATP binding site.

Belongs to the ABC transporter superfamily. Lipoprotein translocase (TC 3.A.1.125) family. In terms of assembly, the complex is composed of two ATP-binding proteins (LolD) and two transmembrane proteins (LolC and LolE).

The protein localises to the cell inner membrane. Its function is as follows. Part of the ABC transporter complex LolCDE involved in the translocation of mature outer membrane-directed lipoproteins, from the inner membrane to the periplasmic chaperone, LolA. Responsible for the formation of the LolA-lipoprotein complex in an ATP-dependent manner. This chain is Lipoprotein-releasing system ATP-binding protein LolD, found in Shewanella denitrificans (strain OS217 / ATCC BAA-1090 / DSM 15013).